The primary structure comprises 1088 residues: MSSWNYVVTAHKPTSVTHSCVGNFTSPQELNLIVAKCTRIEIHLLTPQGLQPMLDVPIYGRIATLELFRPHGEAQDFLFIATERYKFCVLQWDPESSELITRAMGDVSDRIGRPTDNGQIGIIDPDCRLIGLHLYDGLFKVIPFDNKGQLKEAFNIRLEELQVLDIKFLFGCAKPTIAVLYQDNKDARHVKTYEVSLKDKDFVEGPWSQNSLDNGADLLIPVPPPLCGVLIIGEETIVYCSASAFKAIPIRPSITKAYGRVDVDGSRYLLGDHAGMIHLLVITHEKEKVTGLKIELLGETSIASTISYLDNAVVFVGSSYGDSQLVKLNLHPDAKGSYVEVLERYINLGPIVDFCVVDLERQGQGQVVTCSGAFKDGSLRVVRNGIGINEQASVELQGIKGMWSLKSSIDEAFDTFLVVSFISETRILAMNLEDELEETEIEGFLSQVQTLFCHDAVYNQLVQVTSNSVRLVSSTTRELRDEWHAPAGFTVNVATANASQVLLATGGGHLVYLEIGDGKLTEVQHALLEYEVSCLDINPIGDNPNYSQLAAVGMWTDISVRIFSLPELTLITKEQLGGEIIPRSVLLCAFEGISYLLCALGDGHLLNFQMDTTTGQLKDRKKVSLGTQPITLRTFSSKSATHVFAASDRPTVIYSSNKKLLYSNVNLKEVSHMCPFNSAAFPDSLAIAREGELTIGTIDDIQKLHIRTIPLGEHARRICHQEQTRTFGICSLGNQSNSEESEMHFVRLLDDQTFEFMSTYPLDSFEYGCSILSCSFTEDKNVYYCVGTAYVLPEENEPTKGRILVFIVEDGRLQLIAEKETKGAVYSLNAFNGKLLAAINQKIQLYKWMLRDDGTRELQSECGHHGHILALYVQTRGDFIVVGDLMKSISLLLYKHEEGAIEERARDYNANWMSAVEILDDDIYLGAENNFNLLTVKKNSEGATDEERGRLEVVGEYHLGEFVNRFRHGSLVMRLPDSEIGQIPTVIFGTVNGVIGVIASLPQEQYTFLEKLQSSLRKVIKGVGGLSHEQWRSFNNEKRTAEARNFLDGDLIESFLDLSRNKMEDISKSMNVQVEELCKRVEELTRLH.

This sequence belongs to the DDB1 family. As to quaternary structure, component of the CDD complex, at least composed of COP10, DET1 and DDB1A. Component of the CUL4-RBX1-CDD complex. Component of the CUL4-RBX1-DDB1-PRL1 E3 ubiquitin-protein ligase complex. Component of the UV-DDB complex, which is composed of DDB1A and DDB2. Interacts with RAE1. Interacts with WDR55. Interacts with ATCSA-1. Interacts with DDA1. Binds to ASG2; the subcellular localization of this complex depends on ASG2 farnesylation status. Binds to KTN80.2/DWA3. Interacts with HTD1. Interacts directly with DHU1.

The protein resides in the cytoplasm. Its subcellular location is the nucleus. Its pathway is protein modification; protein ubiquitination. Functionally, component of light signal transduction machinery. Involved in repression of photomorphogenesis in darkness by participating in the CDD complex, a complex probably required to regulate the activity of ubiquitin conjugating enzymes (E2s). Repression of photomorphogenesis is probably mediated by ubiquitination and subsequent degradation of photomorphogenesis-promoting factors such as HY5, HYH and LAF1. Plays a role in DNA repair by forming with DDB2 the UV-damaged DNA-binding protein complex (UV-DDB). Component of the CUL4-RBX1-DDB1-PRL1 E3 ubiquitin-protein ligase complex. The sequence is that of DNA damage-binding protein 1a from Arabidopsis thaliana (Mouse-ear cress).